We begin with the raw amino-acid sequence, 240 residues long: Pyridoxine 5'-phosphate synthase (240 aa).

Residue Asn7 coordinates 3-amino-2-oxopropyl phosphate. 1-deoxy-D-xylulose 5-phosphate is bound at residue 9–10; it reads DH. 3-amino-2-oxopropyl phosphate is bound at residue Arg18. Catalysis depends on His43, which acts as the Proton acceptor. Residues Arg45 and His50 each coordinate 1-deoxy-D-xylulose 5-phosphate. The active-site Proton acceptor is the Glu70. Residue Thr100 coordinates 1-deoxy-D-xylulose 5-phosphate. His191 (proton donor) is an active-site residue. Residues Gly192 and 213-214 contribute to the 3-amino-2-oxopropyl phosphate site; that span reads GH.

This sequence belongs to the PNP synthase family. In terms of assembly, homooctamer; tetramer of dimers.

Its subcellular location is the cytoplasm. It catalyses the reaction 3-amino-2-oxopropyl phosphate + 1-deoxy-D-xylulose 5-phosphate = pyridoxine 5'-phosphate + phosphate + 2 H2O + H(+). Its pathway is cofactor biosynthesis; pyridoxine 5'-phosphate biosynthesis; pyridoxine 5'-phosphate from D-erythrose 4-phosphate: step 5/5. Catalyzes the complicated ring closure reaction between the two acyclic compounds 1-deoxy-D-xylulose-5-phosphate (DXP) and 3-amino-2-oxopropyl phosphate (1-amino-acetone-3-phosphate or AAP) to form pyridoxine 5'-phosphate (PNP) and inorganic phosphate. The chain is Pyridoxine 5'-phosphate synthase from Trichodesmium erythraeum (strain IMS101).